Here is a 240-residue protein sequence, read N- to C-terminus: Large ribosomal subunit protein uL2 (240 aa).

A compositionally biased stretch (basic residues) spans 1-12 (MGRRIQGQRRGR). 2 disordered regions span residues 1 to 21 (MGRR…RAPS) and 198 to 240 (VDHP…GSNK). Basic and acidic residues predominate over residues 221 to 231 (PPGRKVGDIAS).

Belongs to the universal ribosomal protein uL2 family. As to quaternary structure, part of the 50S ribosomal subunit. Forms a bridge to the 30S subunit in the 70S ribosome.

In terms of biological role, one of the primary rRNA binding proteins. Required for association of the 30S and 50S subunits to form the 70S ribosome, for tRNA binding and peptide bond formation. It has been suggested to have peptidyltransferase activity; this is somewhat controversial. Makes several contacts with the 16S rRNA in the 70S ribosome. The chain is Large ribosomal subunit protein uL2 from Halorubrum lacusprofundi (strain ATCC 49239 / DSM 5036 / JCM 8891 / ACAM 34).